A 33-amino-acid polypeptide reads, in one-letter code: Photosystem II reaction center protein Psb30 (33 aa).

The chain crosses the membrane as a helical span at residues 5-25 (LIAQLTFLTSIIVSGPLVIAL).

Belongs to the Psb30/Ycf12 family. In terms of assembly, PSII is composed of 1 copy each of membrane proteins PsbA, PsbB, PsbC, PsbD, PsbE, PsbF, PsbH, PsbI, PsbJ, PsbK, PsbL, PsbM, PsbT, PsbX, PsbY, PsbZ, Psb30/Ycf12, peripheral proteins of the oxygen-evolving complex and a large number of cofactors. It forms dimeric complexes.

It localises to the plastid. It is found in the chloroplast thylakoid membrane. In terms of biological role, a core subunit of photosystem II (PSII), probably helps stabilize the reaction center. The sequence is that of Photosystem II reaction center protein Psb30 from Psilotum nudum (Whisk fern).